The chain runs to 198 residues: 7-methyl-GTP pyrophosphatase (198 aa).

The active-site Proton acceptor is aspartate 75.

This sequence belongs to the Maf family. YceF subfamily. Requires a divalent metal cation as cofactor.

It localises to the cytoplasm. It carries out the reaction N(7)-methyl-GTP + H2O = N(7)-methyl-GMP + diphosphate + H(+). In terms of biological role, nucleoside triphosphate pyrophosphatase that hydrolyzes 7-methyl-GTP (m(7)GTP). May have a dual role in cell division arrest and in preventing the incorporation of modified nucleotides into cellular nucleic acids. The chain is 7-methyl-GTP pyrophosphatase from Bartonella quintana (strain Toulouse) (Rochalimaea quintana).